Consider the following 312-residue polypeptide: Ribosomal protein L11 methyltransferase (312 aa).

Residues T162, G183, D205, and N248 each coordinate S-adenosyl-L-methionine.

Belongs to the methyltransferase superfamily. PrmA family.

The protein localises to the cytoplasm. The catalysed reaction is L-lysyl-[protein] + 3 S-adenosyl-L-methionine = N(6),N(6),N(6)-trimethyl-L-lysyl-[protein] + 3 S-adenosyl-L-homocysteine + 3 H(+). Functionally, methylates ribosomal protein L11. In Bacillus cytotoxicus (strain DSM 22905 / CIP 110041 / 391-98 / NVH 391-98), this protein is Ribosomal protein L11 methyltransferase.